The primary structure comprises 312 residues: Tetraacyldisaccharide 4'-kinase (312 aa).

60-67 serves as a coordination point for ATP; the sequence is IAGGSGKT.

Belongs to the LpxK family.

The catalysed reaction is a lipid A disaccharide + ATP = a lipid IVA + ADP + H(+). The protein operates within glycolipid biosynthesis; lipid IV(A) biosynthesis; lipid IV(A) from (3R)-3-hydroxytetradecanoyl-[acyl-carrier-protein] and UDP-N-acetyl-alpha-D-glucosamine: step 6/6. Transfers the gamma-phosphate of ATP to the 4'-position of a tetraacyldisaccharide 1-phosphate intermediate (termed DS-1-P) to form tetraacyldisaccharide 1,4'-bis-phosphate (lipid IVA). The chain is Tetraacyldisaccharide 4'-kinase from Helicobacter pylori (strain J99 / ATCC 700824) (Campylobacter pylori J99).